The chain runs to 343 residues: tRNA N6-adenosine threonylcarbamoyltransferase (343 aa).

Fe cation contacts are provided by His-116 and His-120. Residues 138-142 (LVSGG), Asp-172, Gly-185, Asp-189, and Asn-277 each bind substrate. Asp-305 provides a ligand contact to Fe cation.

Belongs to the KAE1 / TsaD family. It depends on Fe(2+) as a cofactor.

It localises to the cytoplasm. The enzyme catalyses L-threonylcarbamoyladenylate + adenosine(37) in tRNA = N(6)-L-threonylcarbamoyladenosine(37) in tRNA + AMP + H(+). In terms of biological role, required for the formation of a threonylcarbamoyl group on adenosine at position 37 (t(6)A37) in tRNAs that read codons beginning with adenine. Is involved in the transfer of the threonylcarbamoyl moiety of threonylcarbamoyl-AMP (TC-AMP) to the N6 group of A37, together with TsaE and TsaB. TsaD likely plays a direct catalytic role in this reaction. The protein is tRNA N6-adenosine threonylcarbamoyltransferase of Mycobacterium ulcerans (strain Agy99).